The sequence spans 151 residues: MRMAPTESTEGRRLWPGPREGGSGKETTSEKLSNLPRPHSYSPKRADAESFRGVPAAFKKCREVFRACWGSRELLFLFKAISEAGPAQNSCGITLEKAGGLEDTGSHWLSWARCKVLYINGFTDPWKDAQAWILIVSCKKGKGTPEREGRN.

The disordered stretch occupies residues 1 to 48; sequence MRMAPTESTEGRRLWPGPREGGSGKETTSEKLSNLPRPHSYSPKRADA.

This is an uncharacterized protein from Homo sapiens (Human).